Reading from the N-terminus, the 246-residue chain is 3'(2'),5'-bisphosphate nucleotidase CysQ (246 aa).

Residues glutamate 64, aspartate 83, leucine 85, aspartate 86, and aspartate 205 each contribute to the Mg(2+) site. Glutamate 64 is a substrate binding site. Residues 85 to 88 (LDGT) and aspartate 205 contribute to the substrate site.

This sequence belongs to the inositol monophosphatase superfamily. CysQ family. Mg(2+) is required as a cofactor.

The protein resides in the cell inner membrane. The catalysed reaction is adenosine 3',5'-bisphosphate + H2O = AMP + phosphate. Its function is as follows. Converts adenosine-3',5'-bisphosphate (PAP) to AMP. This Escherichia coli O6:H1 (strain CFT073 / ATCC 700928 / UPEC) protein is 3'(2'),5'-bisphosphate nucleotidase CysQ.